The following is a 147-amino-acid chain: Vasopressin-neurophysin 2-copeptin (147 aa).

Cys1 and Cys6 are joined by a disulfide. Position 9 is a glycine amide (Gly9). Disulfide bonds link Cys22–Cys66, Cys25–Cys39, Cys33–Cys56, Cys40–Cys46, Cys73–Cys85, Cys79–Cys97, and Cys86–Cys91. Residue Asn114 is glycosylated (N-linked (GlcNAc...) asparagine).

The protein belongs to the vasopressin/oxytocin family. Interacts with vasopressin receptors V1bR/AVPR1B (Ki=85 pM), V1aR/AVPR1A (Ki=0.6 nM) and V2R/AVPR2 (Ki=4.9 nM). Interacts with oxytocin receptor (OXTR) (Ki=110 nM).

Its subcellular location is the secreted. Functionally, neurophysin 2 specifically binds vasopressin. In terms of biological role, vasopressin has a direct antidiuretic action on the kidney, it also causes vasoconstriction of the peripheral vessels. Acts by binding to vasopressin receptors (V1bR/AVPR1B, V1aR/AVPR1A, and V2R/AVPR2). This Ovis aries (Sheep) protein is Vasopressin-neurophysin 2-copeptin (AVP).